The chain runs to 320 residues: 33 kDa chaperonin (320 aa).

Residues 1–17 are compositionally biased toward basic and acidic residues; sequence MTDASGSERLKRTKDIS. Residues 1–27 are disordered; that stretch reads MTDASGSERLKRTKDISESTPPSSLPD. Disulfide bonds link C262/C264 and C295/C298.

It belongs to the HSP33 family. In terms of processing, under oxidizing conditions two disulfide bonds are formed involving the reactive cysteines. Under reducing conditions zinc is bound to the reactive cysteines and the protein is inactive.

The protein resides in the cytoplasm. Functionally, redox regulated molecular chaperone. Protects both thermally unfolding and oxidatively damaged proteins from irreversible aggregation. Plays an important role in the bacterial defense system toward oxidative stress. The chain is 33 kDa chaperonin from Synechococcus sp. (strain JA-3-3Ab) (Cyanobacteria bacterium Yellowstone A-Prime).